A 577-amino-acid chain; its full sequence is Copine-8 (577 aa).

C2 domains follow at residues 19–146 (TSAT…RLEK) and 155–278 (KCGT…FNVY). The Ca(2+) site is built by aspartate 52, aspartate 58, aspartate 112, aspartate 114, serine 117, lysine 122, aspartate 124, aspartate 186, aspartate 192, aspartate 248, aspartate 250, and aspartate 256. Serine 273 carries the phosphoserine modification. Positions 322-523 (NFTVAIDFTA…VQFVPFRDYI (202 aa)) constitute a VWFA domain.

Belongs to the copine family. Ca(2+) is required as a cofactor.

Functionally, probable calcium-dependent phospholipid-binding protein that may play a role in calcium-mediated intracellular processes. This Mus musculus (Mouse) protein is Copine-8.